A 68-amino-acid polypeptide reads, in one-letter code: DNA-directed RNA polymerase subunit Rpo10 (68 aa).

Positions 7, 10, 44, and 45 each coordinate Zn(2+).

This sequence belongs to the archaeal Rpo10/eukaryotic RPB10 RNA polymerase subunit family. Part of the RNA polymerase complex. Zn(2+) is required as a cofactor.

It is found in the cytoplasm. It catalyses the reaction RNA(n) + a ribonucleoside 5'-triphosphate = RNA(n+1) + diphosphate. DNA-dependent RNA polymerase (RNAP) catalyzes the transcription of DNA into RNA using the four ribonucleoside triphosphates as substrates. The sequence is that of DNA-directed RNA polymerase subunit Rpo10 from Methanococcus maripaludis (strain C6 / ATCC BAA-1332).